A 385-amino-acid chain; its full sequence is MAAVESRVCETEGCSSEAKLQCPTCIKLGIQGSYFCSQECFKGSWATHKLLHKKAKDDKIKPEVSPWTMDGEVNTDPWPGYRYTGKLRPHYPLTPMRPVPSYIQRPDYADHPLGMSESEQTLKGTSQIKTLSPEDIEGMRVVCRLAREVLGVAAMMVKSGITTEEIDHAVHLACISRNCYPSPLNYYNFPKSCCTSVNEVICHGIPDRRPLQDGDIVNVDITVYRDGYHGDLNETFYVGDVDEGAKRLVETTYECLMQAIDEVKPGVRYRELGNIIQKHAQANGFSIVRSYCGHGIHKLFHTAPNVPHYGKNKAVGVMKPGHVFTIEPMICEGGWQDETWPDGWTAITRDGKRSAQFEHTLLVTETGCEILTCRLEENGRPYFIS.

Residues 6–59 (SRVCETEGCSSEAKLQCPTCIKLGIQGSYFCSQECFKGSWATHKLLHKKAKDDK) form a C6H2-type zinc finger. Positions 9, 14, 22, 25, 36, 40, 48, and 52 each coordinate Zn(2+). His-203 lines the a protein pocket. The Zn(2+) site is built by Asp-220, Asp-231, and His-294. His-301 serves as a coordination point for a protein. Zn(2+) is bound by residues Glu-327 and Glu-358.

This sequence belongs to the peptidase M24A family. Methionine aminopeptidase type 1 subfamily. Associates with the 60S ribosomal subunit of the 80S translational complex. It depends on Zn(2+) as a cofactor. Requires Co(2+) as cofactor. Mn(2+) serves as cofactor. The cofactor is Fe(2+).

The protein localises to the cytoplasm. The catalysed reaction is Release of N-terminal amino acids, preferentially methionine, from peptides and arylamides.. Functionally, cotranslationally removes the N-terminal methionine from nascent proteins. The N-terminal methionine is often cleaved when the second residue in the primary sequence is small and uncharged (Met-Ala-, Cys, Gly, Pro, Ser, Thr, or Val). In Xenopus laevis (African clawed frog), this protein is Methionine aminopeptidase 1 (metap1).